The following is a 346-amino-acid chain: 3-keto-steroid reductase ERG27 (346 aa).

NADP(+)-binding residues include Leu-19, Thr-42, and Lys-48. Residues Ser-182 and Tyr-205 each act as proton donor in the active site. Residues Tyr-205, Lys-209, and Ser-241 each coordinate NADP(+). The Lowers pKa of active site Tyr role is filled by Lys-209. Residues 242–262 form a helical membrane-spanning segment; that stretch reads FSFFQYLNVFTYYGMLFLFYL. N-linked (GlcNAc...) asparagine glycosylation is present at Asn-272.

The protein belongs to the short-chain dehydrogenases/reductases (SDR) family. ERG27 subfamily. As to quaternary structure, heterotetramer of ERG25, ERG26, ERG27 and ERG28. ERG28 acts as a scaffold to tether ERG27 and other 4,4-demethylation-related enzymes, forming a demethylation enzyme complex, in the endoplasmic reticulum. Interacts with ERG25 and ERG28. Also interacts with ERG7, but only in lipid particles.

Its subcellular location is the endoplasmic reticulum membrane. It is found in the lipid droplet. It catalyses the reaction 3-dehydro-4alpha-methylzymosterol + NADPH + H(+) = 4alpha-methylzymosterol + NADP(+). It participates in steroid biosynthesis; zymosterol biosynthesis; zymosterol from lanosterol: step 5/6. 3-keto-steroid reductase; part of the third module of ergosterol biosynthesis pathway that includes the late steps of the pathway. ERG27 is a catalytic component of the C-4 demethylation complex that catalyzes the reduction of the keto group on the C-3. The third module or late pathway involves the ergosterol synthesis itself through consecutive reactions that mainly occur in the endoplasmic reticulum (ER) membrane. Firstly, the squalene synthase ERG9 catalyzes the condensation of 2 farnesyl pyrophosphate moieties to form squalene, which is the precursor of all steroids. Squalene synthase is crucial for balancing the incorporation of farnesyl diphosphate (FPP) into sterol and nonsterol isoprene synthesis. Secondly, the squalene epoxidase ERG1 catalyzes the stereospecific oxidation of squalene to (S)-2,3-epoxysqualene, which is considered to be a rate-limiting enzyme in steroid biosynthesis. Then, the lanosterol synthase ERG7 catalyzes the cyclization of (S)-2,3 oxidosqualene to lanosterol, a reaction that forms the sterol core. In the next steps, lanosterol is transformed to zymosterol through a complex process involving various demethylation, reduction and desaturation reactions. The lanosterol 14-alpha-demethylase ERG11 (also known as CYP51) catalyzes C14-demethylation of lanosterol to produce 4,4'-dimethyl cholesta-8,14,24-triene-3-beta-ol, which is critical for ergosterol biosynthesis. The C-14 reductase ERG24 reduces the C14=C15 double bond of 4,4-dimethyl-cholesta-8,14,24-trienol to produce 4,4-dimethyl-cholesta-8,24-dienol. 4,4-dimethyl-cholesta-8,24-dienol is substrate of the C-4 demethylation complex ERG25-ERG26-ERG27 in which ERG25 catalyzes the three-step monooxygenation required for the demethylation of 4,4-dimethyl and 4alpha-methylsterols, ERG26 catalyzes the oxidative decarboxylation that results in a reduction of the 3-beta-hydroxy group at the C-3 carbon to an oxo group, and ERG27 is responsible for the reduction of the keto group on the C-3. ERG28 has a role as a scaffold to help anchor ERG25, ERG26 and ERG27 to the endoplasmic reticulum and ERG29 regulates the activity of the iron-containing C4-methylsterol oxidase ERG25. Then, the sterol 24-C-methyltransferase ERG6 catalyzes the methyl transfer from S-adenosyl-methionine to the C-24 of zymosterol to form fecosterol. The C-8 sterol isomerase ERG2 catalyzes the reaction which results in unsaturation at C-7 in the B ring of sterols and thus converts fecosterol to episterol. The sterol-C5-desaturase ERG3 then catalyzes the introduction of a C-5 double bond in the B ring to produce 5-dehydroepisterol. The C-22 sterol desaturase ERG5 further converts 5-dehydroepisterol into ergosta-5,7,22,24(28)-tetraen-3beta-ol by forming the C-22(23) double bond in the sterol side chain. Finally, ergosta-5,7,22,24(28)-tetraen-3beta-ol is substrate of the C-24(28) sterol reductase ERG4 to produce ergosterol. In terms of biological role, facilitates the association of ERG7 with lipid particles preventing its digestion in the endoplasmic reticulum and the lipid particles. This is 3-keto-steroid reductase ERG27 from Candida albicans (Yeast).